Reading from the N-terminus, the 102-residue chain is NADH-quinone oxidoreductase subunit K 1 (102 aa).

3 helical membrane passes run 6 to 26 (LNAY…GVLV), 31 to 51 (LAIL…FVAF), and 65 to 85 (FLVI…TVLL).

The protein belongs to the complex I subunit 4L family. As to quaternary structure, NDH-1 is composed of 14 different subunits. Subunits NuoA, H, J, K, L, M, N constitute the membrane sector of the complex.

It localises to the cell membrane. It catalyses the reaction a quinone + NADH + 5 H(+)(in) = a quinol + NAD(+) + 4 H(+)(out). In terms of biological role, NDH-1 shuttles electrons from NADH, via FMN and iron-sulfur (Fe-S) centers, to quinones in the respiratory chain. The immediate electron acceptor for the enzyme in this species is believed to be a menaquinone. Couples the redox reaction to proton translocation (for every two electrons transferred, four hydrogen ions are translocated across the cytoplasmic membrane), and thus conserves the redox energy in a proton gradient. This Symbiobacterium thermophilum (strain DSM 24528 / JCM 14929 / IAM 14863 / T) protein is NADH-quinone oxidoreductase subunit K 1.